Reading from the N-terminus, the 482-residue chain is Catalase (482 aa).

The span at 1 to 23 (MSQNKTLTTASGPPVADNQNSRS) shows a compositional bias: polar residues. The disordered stretch occupies residues 1–28 (MSQNKTLTTASGPPVADNQNSRSAGPRG). Residues histidine 55 and asparagine 128 contribute to the active site. Tyrosine 338 provides a ligand contact to heme. The interval 370 to 395 (SMAFGSNGGAAPNYEPNSYADAPKQA) is disordered.

Belongs to the catalase family. Heme serves as cofactor.

The enzyme catalyses 2 H2O2 = O2 + 2 H2O. In terms of biological role, decomposes hydrogen peroxide into water and oxygen; serves to protect cells from the toxic effects of hydrogen peroxide. The chain is Catalase (cat) from Onchocerca volvulus endobacterium.